We begin with the raw amino-acid sequence, 498 residues long: MAIMRELVDAYFKEHGLIDHQIESYNDFVENRLQKIIDEVGYIETEITGGYKVKLGKIKVGKPVIKEADGSIRPITPMEARIRDLTYSVPLYLEMTPIIGEGEDAREGETVEVYIGELPVMLGSKICHLYGKSREELIDLGEDPEDPFGYFIINGTEKVLITQEDLIPNRILCEKAERSGKIVDVAKVFSTRHGFRALCTVERHPDGLLYATFPGMPGQIPLVILMKALGAETDKDIIESIDDERFFMEIVLNIQEIREEHNINSPEDALEFIGKRVAPGQAKDYRLKRAETVLCNYLLPHLGVTKEDFPKKIRFLGIMARNALELYFGYRGEDDKDHYAYKRAKLAGDLMEDLFRYAFSQLVKDIKYQLERQTLRNKTPSIQAAVRSDILTERIKHAMATGTWVGGKTGVSQLLDRTSYLATNSQLRRIVSPLSRSQPHFEARELHGTHWGKICPSETPEGPNCGLVKNFAIMCKVTREEDDSKVIELLKSFGINVS.

This sequence belongs to the RNA polymerase beta chain family. Part of the RNA polymerase complex.

The protein localises to the cytoplasm. It catalyses the reaction RNA(n) + a ribonucleoside 5'-triphosphate = RNA(n+1) + diphosphate. Its function is as follows. DNA-dependent RNA polymerase (RNAP) catalyzes the transcription of DNA into RNA using the four ribonucleoside triphosphates as substrates. The Rpo2 subunit (Rpo2N and Rpo2C in this organism) is implicated in DNA promoter recognition and in nucleotide binding. The sequence is that of DNA-directed RNA polymerase subunit Rpo2N from Methanocaldococcus jannaschii (strain ATCC 43067 / DSM 2661 / JAL-1 / JCM 10045 / NBRC 100440) (Methanococcus jannaschii).